An 86-amino-acid chain; its full sequence is Large ribosomal subunit protein uL23 (86 aa).

It belongs to the universal ribosomal protein uL23 family. In terms of assembly, part of the 50S ribosomal subunit. Contacts protein L29.

Functionally, binds to 23S rRNA. One of the proteins that surrounds the polypeptide exit tunnel on the outside of the ribosome. This chain is Large ribosomal subunit protein uL23, found in Methanococcus maripaludis (strain C6 / ATCC BAA-1332).